A 468-amino-acid chain; its full sequence is Argininosuccinate lyase (468 aa).

Belongs to the lyase 1 family. Argininosuccinate lyase subfamily.

Its subcellular location is the cytoplasm. The catalysed reaction is 2-(N(omega)-L-arginino)succinate = fumarate + L-arginine. The protein operates within amino-acid biosynthesis; L-arginine biosynthesis; L-arginine from L-ornithine and carbamoyl phosphate: step 3/3. This Methanothermobacter thermautotrophicus (strain ATCC 29096 / DSM 1053 / JCM 10044 / NBRC 100330 / Delta H) (Methanobacterium thermoautotrophicum) protein is Argininosuccinate lyase.